We begin with the raw amino-acid sequence, 197 residues long: Large ribosomal subunit protein uL13A (197 aa).

At Ser-151 the chain carries Phosphoserine.

Belongs to the universal ribosomal protein uL13 family. Component of the large ribosomal subunit (LSU). Mature yeast ribosomes consist of a small (40S) and a large (60S) subunit. The 40S small subunit contains 1 molecule of ribosomal RNA (18S rRNA) and at least 33 different proteins. The large 60S subunit contains 3 rRNA molecules (25S, 5.8S and 5S rRNA) and at least 46 different proteins.

The protein localises to the cytoplasm. It is found in the nucleus. It localises to the nucleolus. Component of the ribosome, a large ribonucleoprotein complex responsible for the synthesis of proteins in the cell. The small ribosomal subunit (SSU) binds messenger RNAs (mRNAs) and translates the encoded message by selecting cognate aminoacyl-transfer RNA (tRNA) molecules. The large subunit (LSU) contains the ribosomal catalytic site termed the peptidyl transferase center (PTC), which catalyzes the formation of peptide bonds, thereby polymerizing the amino acids delivered by tRNAs into a polypeptide chain. The nascent polypeptides leave the ribosome through a tunnel in the LSU and interact with protein factors that function in enzymatic processing, targeting, and the membrane insertion of nascent chains at the exit of the ribosomal tunnel. The sequence is that of Large ribosomal subunit protein uL13A (rpl1602) from Schizosaccharomyces pombe (strain 972 / ATCC 24843) (Fission yeast).